The sequence spans 298 residues: Protoheme IX farnesyltransferase (298 aa).

9 helical membrane passes run 24 to 44 (VIQL…PGLP), 49 to 69 (LQLA…AAAF), 100 to 120 (LLFS…WVNP), 121 to 141 (LTMW…TVIL), 149 to 169 (IVIG…AMAG), 175 to 195 (ALIL…ALAL), 220 to 240 (LMVL…YVYG), 244 to 264 (WLYL…AFYL), and 277 to 297 (FRFS…DHYL).

Belongs to the UbiA prenyltransferase family. Protoheme IX farnesyltransferase subfamily.

The protein resides in the cell inner membrane. The enzyme catalyses heme b + (2E,6E)-farnesyl diphosphate + H2O = Fe(II)-heme o + diphosphate. Its pathway is porphyrin-containing compound metabolism; heme O biosynthesis; heme O from protoheme: step 1/1. Functionally, converts heme B (protoheme IX) to heme O by substitution of the vinyl group on carbon 2 of heme B porphyrin ring with a hydroxyethyl farnesyl side group. The sequence is that of Protoheme IX farnesyltransferase from Albidiferax ferrireducens (strain ATCC BAA-621 / DSM 15236 / T118) (Rhodoferax ferrireducens).